The sequence spans 119 residues: NADH-quinone oxidoreductase subunit A (119 aa).

3 helical membrane passes run Val-9–Val-29, Leu-63–Val-83, and Val-88–Ala-108.

Belongs to the complex I subunit 3 family. NDH-1 is composed of 14 different subunits. Subunits NuoA, H, J, K, L, M, N constitute the membrane sector of the complex.

Its subcellular location is the cell inner membrane. It carries out the reaction a quinone + NADH + 5 H(+)(in) = a quinol + NAD(+) + 4 H(+)(out). Functionally, NDH-1 shuttles electrons from NADH, via FMN and iron-sulfur (Fe-S) centers, to quinones in the respiratory chain. The immediate electron acceptor for the enzyme in this species is believed to be ubiquinone. Couples the redox reaction to proton translocation (for every two electrons transferred, four hydrogen ions are translocated across the cytoplasmic membrane), and thus conserves the redox energy in a proton gradient. This chain is NADH-quinone oxidoreductase subunit A, found in Paracidovorax citrulli (strain AAC00-1) (Acidovorax citrulli).